A 211-amino-acid chain; its full sequence is Probable nicotinate-nucleotide adenylyltransferase (211 aa).

It belongs to the NadD family.

It carries out the reaction nicotinate beta-D-ribonucleotide + ATP + H(+) = deamido-NAD(+) + diphosphate. The protein operates within cofactor biosynthesis; NAD(+) biosynthesis; deamido-NAD(+) from nicotinate D-ribonucleotide: step 1/1. In terms of biological role, catalyzes the reversible adenylation of nicotinate mononucleotide (NaMN) to nicotinic acid adenine dinucleotide (NaAD). This is Probable nicotinate-nucleotide adenylyltransferase from Lactiplantibacillus plantarum (strain ATCC BAA-793 / NCIMB 8826 / WCFS1) (Lactobacillus plantarum).